The chain runs to 719 residues: Photosystem I P700 chlorophyll a apoprotein A1 (719 aa).

8 helical membrane-spanning segments follow: residues 61 to 84 (VFSA…FHGA), 147 to 170 (LYCT…FHYH), 186 to 210 (LNHH…HVSL), 282 to 300 (TAHH…GHMY), 337 to 360 (WHAQ…HHMY), 376 to 402 (LSLF…IFMV), 424 to 446 (AIVS…LYIH), and 522 to 540 (FLVH…LILL). The [4Fe-4S] cluster site is built by C564 and C573. The next 2 membrane-spanning stretches (helical) occupy residues 580–601 (HVFL…HFSW) and 655–677 (LSAY…MFLF). H666 lines the chlorophyll a' pocket. Chlorophyll a is bound by residues M674 and Y682. W683 contacts phylloquinone. A helical membrane pass occupies residues 715–719 (AVGVA).

It belongs to the PsaA/PsaB family. The PsaA/B heterodimer binds the P700 chlorophyll special pair and subsequent electron acceptors. PSI consists of a core antenna complex that captures photons, and an electron transfer chain that converts photonic excitation into a charge separation. The eukaryotic PSI reaction center is composed of at least 11 subunits. P700 is a chlorophyll a/chlorophyll a' dimer, A0 is one or more chlorophyll a, A1 is one or both phylloquinones and FX is a shared 4Fe-4S iron-sulfur center. serves as cofactor.

It is found in the plastid. It localises to the chloroplast thylakoid membrane. The enzyme catalyses reduced [plastocyanin] + hnu + oxidized [2Fe-2S]-[ferredoxin] = oxidized [plastocyanin] + reduced [2Fe-2S]-[ferredoxin]. PsaA and PsaB bind P700, the primary electron donor of photosystem I (PSI), as well as the electron acceptors A0, A1 and FX. PSI is a plastocyanin-ferredoxin oxidoreductase, converting photonic excitation into a charge separation, which transfers an electron from the donor P700 chlorophyll pair to the spectroscopically characterized acceptors A0, A1, FX, FA and FB in turn. Oxidized P700 is reduced on the lumenal side of the thylakoid membrane by plastocyanin. The polypeptide is Photosystem I P700 chlorophyll a apoprotein A1 (Torreya californica (California nutmeg)).